The chain runs to 242 residues: Murein peptide amidase A (242 aa).

Residues 1–234 enclose the Peptidase M14 domain; that stretch reads MTVTRPRAER…FAMANLLRWH (234 aa). H49, E52, and H157 together coordinate Zn(2+). E210 serves as the catalytic Proton donor/acceptor.

The protein belongs to the peptidase M14 family. As to quaternary structure, homodimer. Zn(2+) is required as a cofactor.

Its subcellular location is the cytoplasm. The catalysed reaction is L-alanyl-gamma-D-glutamyl-meso-2,6-diaminopimelate + H2O = L-alanyl-D-glutamate + meso-2,6-diaminopimelate. It functions in the pathway cell wall degradation; peptidoglycan degradation. In terms of biological role, involved in muropeptide degradation. Catalyzes the hydrolysis of the gamma-D-glutamyl-diaminopimelic acid (gamma-D-Glu-Dap) amide bond in the murein tripeptide L-alanyl-gamma-D-glutamyl-meso-diaminopimelic acid, leading to the formation of L-Ala-gamma-D-Glu and Dap. The polypeptide is Murein peptide amidase A (Escherichia coli O157:H7).